We begin with the raw amino-acid sequence, 419 residues long: UDP-N-acetylglucosamine 1-carboxyvinyltransferase 2 (419 aa).

24-25 (KN) is a phosphoenolpyruvate binding site. Arg-94 serves as a coordination point for UDP-N-acetyl-alpha-D-glucosamine. Cys-118 serves as the catalytic Proton donor. Cys-118 carries the 2-(S-cysteinyl)pyruvic acid O-phosphothioketal modification. Residues 123 to 127 (RPIDQ), Asp-307, and Ile-329 contribute to the UDP-N-acetyl-alpha-D-glucosamine site.

This sequence belongs to the EPSP synthase family. MurA subfamily.

The protein resides in the cytoplasm. It catalyses the reaction phosphoenolpyruvate + UDP-N-acetyl-alpha-D-glucosamine = UDP-N-acetyl-3-O-(1-carboxyvinyl)-alpha-D-glucosamine + phosphate. It participates in cell wall biogenesis; peptidoglycan biosynthesis. Cell wall formation. Adds enolpyruvyl to UDP-N-acetylglucosamine. The polypeptide is UDP-N-acetylglucosamine 1-carboxyvinyltransferase 2 (Staphylococcus epidermidis (strain ATCC 35984 / DSM 28319 / BCRC 17069 / CCUG 31568 / BM 3577 / RP62A)).